Reading from the N-terminus, the 511-residue chain is MEKFEGYSEKHKSRQQYFVYPLLFQEYIYAFAHDYGLNDFEPVEIFSCNNKKFSSLLVKRLIIRMYQQSFWMNSVNHPNQDRLLDYKIGFYSEFYSQILSEGFAIVVETPFSLRELPCPKEKEIPKFQNLHSIHSIFSFLEDKFVHLDYLSHIEIPYPIHLEILVQLLQYRIQDVPSLHLLRFFLNNYSNWNSFITSMKSIFLLKKENKRLFRFLYNSYVSEYEFFLLFLRKQSSCLPLAASGTFLERIHFSKKMEHFWIMYPGFFRKTIWFFMDPLMHYVRYQGKALFASKGTPFLNKKWKWYLINLWQYCFSFWTQPRRIHLNQLANSCFDFMGYLSSVPKSPFLVKNQMLDNSFLIDTLIQKLDTIVPATALIGYLSKAQFCTGSGHPISKPIWTDLSDWDILDRFGRICRNLFHYHSGSSKKRTLYRLKYILRLSCARTLARKHKSTVRTFMQRLGSAFLEEFFTEEELVFSLMFTKTTLCSFRGSHSERIWYFDIIRINDLVKPLN.

The protein belongs to the intron maturase 2 family. MatK subfamily.

The protein resides in the plastid. Its subcellular location is the chloroplast. Functionally, usually encoded in the trnK tRNA gene intron. Probably assists in splicing its own and other chloroplast group II introns. This chain is Maturase K, found in Lolium perenne (Perennial ryegrass).